The following is a 184-amino-acid chain: Ribulose bisphosphate carboxylase small subunit, chloroplastic 2 (184 aa).

A chloroplast-targeting transit peptide spans 1-59; it reads MASSMMSNAATAVAVAATSGGAQANMVAPFNGLKSIASFPVTRKSNDITSIASNGGRVQ.

The protein belongs to the RuBisCO small chain family. As to quaternary structure, heterohexadecamer of 8 large and 8 small subunits.

The protein resides in the plastid. It is found in the chloroplast. RuBisCO catalyzes two reactions: the carboxylation of D-ribulose 1,5-bisphosphate, the primary event in carbon dioxide fixation, as well as the oxidative fragmentation of the pentose substrate. Both reactions occur simultaneously and in competition at the same active site. Although the small subunit is not catalytic it is essential for maximal activity. The protein is Ribulose bisphosphate carboxylase small subunit, chloroplastic 2 of Amaranthus hypochondriacus (Prince-of-Wales feather).